We begin with the raw amino-acid sequence, 284 residues long: GTP cyclohydrolase MptA (284 aa).

It belongs to the GTP cyclohydrolase IV family. In terms of assembly, homodimer. Requires Fe(2+) as cofactor.

The catalysed reaction is GTP + H2O = 7,8-dihydroneopterin 2',3'-cyclic phosphate + formate + diphosphate + H(+). Its pathway is cofactor biosynthesis; 5,6,7,8-tetrahydromethanopterin biosynthesis. In terms of biological role, converts GTP to 7,8-dihydro-D-neopterin 2',3'-cyclic phosphate, the first intermediate in the biosynthesis of coenzyme methanopterin. The polypeptide is GTP cyclohydrolase MptA (Thermoplasma volcanium (strain ATCC 51530 / DSM 4299 / JCM 9571 / NBRC 15438 / GSS1)).